Consider the following 258-residue polypeptide: 5-oxoprolinase subunit A (258 aa).

Belongs to the LamB/PxpA family. Forms a complex composed of PxpA, PxpB and PxpC.

The catalysed reaction is 5-oxo-L-proline + ATP + 2 H2O = L-glutamate + ADP + phosphate + H(+). Catalyzes the cleavage of 5-oxoproline to form L-glutamate coupled to the hydrolysis of ATP to ADP and inorganic phosphate. The polypeptide is 5-oxoprolinase subunit A (Corynebacterium jeikeium (strain K411)).